The primary structure comprises 141 residues: Large ribosomal subunit protein uL16 (141 aa).

The protein belongs to the universal ribosomal protein uL16 family. As to quaternary structure, part of the 50S ribosomal subunit.

Binds 23S rRNA and is also seen to make contacts with the A and possibly P site tRNAs. The chain is Large ribosomal subunit protein uL16 from Geobacillus thermodenitrificans (strain NG80-2).